A 322-amino-acid polypeptide reads, in one-letter code: Protein-methionine-sulfoxide reductase catalytic subunit MsrP (322 aa).

Residues 1 to 59 constitute a signal peptide (tat-type signal); that stretch reads MSFRDALNLPSSEITDESVYRDRRRLLQLLALTPALGVAGCAEADPPPPPKTVVTPAQA. Mo-molybdopterin is bound by residues Asn79, 82–83, Cys137, Thr172, Asn220, Arg225, and 236–238; these read YE and SIK.

It belongs to the MsrP family. Heterodimer of a catalytic subunit (MsrP) and a heme-binding subunit (MsrQ). Requires Mo-molybdopterin as cofactor. Predicted to be exported by the Tat system. The position of the signal peptide cleavage has not been experimentally proven.

The protein resides in the periplasm. The catalysed reaction is L-methionyl-[protein] + a quinone + H2O = L-methionyl-(S)-S-oxide-[protein] + a quinol. It catalyses the reaction L-methionyl-[protein] + a quinone + H2O = L-methionyl-(R)-S-oxide-[protein] + a quinol. Part of the MsrPQ system that repairs oxidized periplasmic proteins containing methionine sulfoxide residues (Met-O), using respiratory chain electrons. Thus protects these proteins from oxidative-stress damage caused by reactive species of oxygen and chlorine generated by the host defense mechanisms. MsrPQ is essential for the maintenance of envelope integrity under bleach stress, rescuing a wide series of structurally unrelated periplasmic proteins from methionine oxidation. The catalytic subunit MsrP is non-stereospecific, being able to reduce both (R-) and (S-) diastereoisomers of methionine sulfoxide. This is Protein-methionine-sulfoxide reductase catalytic subunit MsrP from Xanthomonas axonopodis pv. citri (strain 306).